The following is a 452-amino-acid chain: MTATADLWPLFPDHIKQLQTRAERLFKRENLDLVAIHSGQQKRWFLDDMNYPFRANPHFKAWCPETQLANAWVILKPNTRPTLVLLSSPDFWHTTASLEGAPWLEEFHVEHISSPEAIEKLLPYDKKSAAYLGEHIEVAKALGFENINPDPVLHFFHYHRLFKTDYEIACLTQANHIAAEGHVAAADAFFNGASEFDCLLKYMAATRQGQNEVPYNHIIGQNENASVLHHWMPDKKASGSLKSMLVDAGAEVCGYAADISRTWSKQHNEYEELIAALDQITLALIDKMKPGVEFPALHQLAHEQIANVLFAFGFVSCSPEQMIEDGITTVFLPHGLGHPLGLQVHDVGAAQADERGTPIAPPSGHLTLKTTRTVEPRQVYTIEPGIYFIEPLLQKLANSRNKHLINWRRVDEFKPFGGVRIEDNIVVYRERNDNLTRQTALDAYVKKVTRLA.

Residues aspartate 247, aspartate 258, histidine 338, glutamate 383, and glutamate 422 each contribute to the Mn(2+) site.

Belongs to the peptidase M24B family. Bacterial-type prolidase subfamily. The cofactor is Mn(2+).

The enzyme catalyses Xaa-L-Pro dipeptide + H2O = an L-alpha-amino acid + L-proline. Splits dipeptides with a prolyl residue in the C-terminal position. This is Xaa-Pro dipeptidase 1 from Idiomarina loihiensis (strain ATCC BAA-735 / DSM 15497 / L2-TR).